The chain runs to 132 residues: Interleukin-4 (132 aa).

The first 24 residues, 1-24, serve as a signal peptide directing secretion; it reads MGLTSQLIPTLVCLLALTSTFVHG. 4 N-linked (GlcNAc...) asparagine glycosylation sites follow: N28, N45, N62, and N101. Disulfide bonds link C48/C84 and C70/C104.

The protein belongs to the IL-4/IL-13 family.

The protein localises to the secreted. Functionally, participates in at least several B-cell activation processes as well as of other cell types. It is a costimulator of DNA-synthesis. It induces the expression of class II MHC molecules on resting B-cells. It enhances both secretion and cell surface expression of IgE and IgG1. It also regulates the expression of the low affinity Fc receptor for IgE (CD23) on both lymphocytes and monocytes. Positively regulates IL31RA expression in macrophages. Stimulates autophagy in dendritic cells by interfering with mTORC1 signaling and through the induction of RUFY4. The polypeptide is Interleukin-4 (IL4) (Ailuropoda melanoleuca (Giant panda)).